Reading from the N-terminus, the 298-residue chain is tRNA pseudouridine synthase-like 1 (298 aa).

Catalysis depends on aspartate 60, which acts as the Nucleophile. Position 124 (tyrosine 124) interacts with substrate.

This sequence belongs to the tRNA pseudouridine synthase TruA family.

It catalyses the reaction a uridine in tRNA = a pseudouridine in tRNA. This chain is tRNA pseudouridine synthase-like 1 (pusl1), found in Xenopus laevis (African clawed frog).